The chain runs to 120 residues: Small ribosomal subunit protein uS17m (120 aa).

A mitochondrion-targeting transit peptide spans 1 to 20; it reads MSIVRSSVHAKWVVGKVIGT.

Belongs to the universal ribosomal protein uS17 family. As to quaternary structure, component of the mitochondrial ribosome small subunit (28S) which comprises a 12S rRNA and about 30 distinct proteins.

The protein resides in the mitochondrion. The chain is Small ribosomal subunit protein uS17m (Mrps17) from Mus musculus (Mouse).